Consider the following 275-residue polypeptide: Phospholipid scramblase (275 aa).

The chain crosses the membrane as a helical span at residues 256 to 272 (WKMMLLAFALFLDYMYY).

The protein belongs to the phospholipid scramblase family. As to quaternary structure, forms homooligomers in the presence of calcium. Ca(2+) is required as a cofactor. The cofactor is Mg(2+).

The protein localises to the membrane. Its subcellular location is the cell membrane. It carries out the reaction a 1,2-diacyl-sn-glycero-3-phosphoethanolamine(in) = a 1,2-diacyl-sn-glycero-3-phosphoethanolamine(out). In terms of biological role, catalyzes calcium-induced ATP-independent rapid bidirectional and non-specific movement of phospholipids (lipid scrambling or lipid flip-flop) between the inner and outer leaflet of the plasma membrane resulting in collapse of the phospholipid asymmetry. Preferentially, mediates calcium-dependent phosphatidylethanolamine externalization. During the liver stage, plays a role in the interaction with, and thus invasion of, host hepatocytes. Dispensable for host erythrocyte invasion and asexual parasite development. This Plasmodium falciparum (isolate 3D7) protein is Phospholipid scramblase.